Consider the following 395-residue polypeptide: Chorismate synthase (395 aa).

2 residues coordinate NADP(+): arginine 40 and arginine 46. A disordered region spans residues 98–120 (LPREGRNAPLSRPRPGHADLTGM). Residues 134–136 (RSS), 256–257 (QA), glycine 301, 316–320 (KPIPS), and arginine 342 each bind FMN.

This sequence belongs to the chorismate synthase family. Homotetramer. FMNH2 is required as a cofactor.

It catalyses the reaction 5-O-(1-carboxyvinyl)-3-phosphoshikimate = chorismate + phosphate. Its pathway is metabolic intermediate biosynthesis; chorismate biosynthesis; chorismate from D-erythrose 4-phosphate and phosphoenolpyruvate: step 7/7. In terms of biological role, catalyzes the anti-1,4-elimination of the C-3 phosphate and the C-6 proR hydrogen from 5-enolpyruvylshikimate-3-phosphate (EPSP) to yield chorismate, which is the branch point compound that serves as the starting substrate for the three terminal pathways of aromatic amino acid biosynthesis. This reaction introduces a second double bond into the aromatic ring system. The chain is Chorismate synthase from Bifidobacterium longum subsp. infantis (strain ATCC 15697 / DSM 20088 / JCM 1222 / NCTC 11817 / S12).